A 292-amino-acid chain; its full sequence is Putative xanthine dehydrogenase FAD-binding subunit XdhB (292 aa).

The FAD-binding PCMH-type domain maps to 1–176; the sequence is MFDFASYHRA…VAFHFPPQPK (176 aa). Residues 27–34, 109–113, I165, and F184 each bind FAD; these read KLLAGGTD and ATYGG.

As to quaternary structure, heterotrimer of XdhA, XdhB and XdhC. The cofactor is FAD.

The enzyme catalyses xanthine + NAD(+) + H2O = urate + NADH + H(+). The catalysed reaction is hypoxanthine + NAD(+) + H2O = xanthine + NADH + H(+). Its pathway is purine metabolism; hypoxanthine degradation; urate from hypoxanthine: step 1/2. It participates in purine metabolism; hypoxanthine degradation; urate from hypoxanthine: step 2/2. Presumed to be a dehydrogenase, but possibly an oxidase. Participates in limited purine salvage (requires aspartate) but does not support aerobic growth on purines as the sole carbon source (purine catabolism). This Escherichia coli (strain K12) protein is Putative xanthine dehydrogenase FAD-binding subunit XdhB (xdhB).